A 101-amino-acid polypeptide reads, in one-letter code: Cell division protein FtsB (101 aa).

Residues M1 to I3 lie on the Cytoplasmic side of the membrane. Residues V4–L21 traverse the membrane as a helical segment. Residues G22–Q101 are Periplasmic-facing. A coiled-coil region spans residues E33 to L53.

Belongs to the FtsB family. Part of a complex composed of FtsB, FtsL and FtsQ.

The protein localises to the cell inner membrane. In terms of biological role, essential cell division protein. May link together the upstream cell division proteins, which are predominantly cytoplasmic, with the downstream cell division proteins, which are predominantly periplasmic. In Polynucleobacter necessarius subsp. necessarius (strain STIR1), this protein is Cell division protein FtsB.